We begin with the raw amino-acid sequence, 283 residues long: ATP synthase gamma chain (283 aa).

It belongs to the ATPase gamma chain family. In terms of assembly, F-type ATPases have 2 components, CF(1) - the catalytic core - and CF(0) - the membrane proton channel. CF(1) has five subunits: alpha(3), beta(3), gamma(1), delta(1), epsilon(1). CF(0) has three main subunits: a, b and c.

It is found in the cell inner membrane. Its function is as follows. Produces ATP from ADP in the presence of a proton gradient across the membrane. The gamma chain is believed to be important in regulating ATPase activity and the flow of protons through the CF(0) complex. The sequence is that of ATP synthase gamma chain from Ehrlichia ruminantium (strain Gardel).